The chain runs to 394 residues: Alcohol dehydrogenase-like 3 (394 aa).

The Zn(2+) site is built by cysteine 48, threonine 50, histidine 71, cysteine 101, cysteine 104, cysteine 107, cysteine 115, and cysteine 188. An alcohol is bound by residues threonine 50 and histidine 71. Threonine 50 serves as a coordination point for NAD(+). NAD(+)-binding positions include 213–218, aspartate 237, lysine 242, threonine 283, valine 306, 306–308, phenylalanine 333, and arginine 383; these read GLGSVG and VGI.

Belongs to the zinc-containing alcohol dehydrogenase family. Class-III subfamily. Homodimer. Zn(2+) serves as cofactor.

It localises to the cytoplasm. It carries out the reaction a primary alcohol + NAD(+) = an aldehyde + NADH + H(+). The enzyme catalyses a secondary alcohol + NAD(+) = a ketone + NADH + H(+). In Arabidopsis thaliana (Mouse-ear cress), this protein is Alcohol dehydrogenase-like 3.